The primary structure comprises 1116 residues: Anillin (1116 aa).

2 stretches are compositionally biased toward basic and acidic residues: residues 1 to 25 (MDPF…KMAD) and 85 to 94 (KQPKTPELPK). Disordered regions lie at residues 1–188 (MDPF…PVGR), 205–257 (DLSH…PKDT), 304–363 (KPNE…KVAT), and 443–522 (NVWT…PRLV). The segment covering 101–119 (ASHQQLRATNQTPQVSLLS) has biased composition (polar residues). Basic and acidic residues predominate over residues 120–133 (SDKELTASDVKDAS). Residues 142-254 (LADQRRYWDN…QDTTSCSQRP (113 aa)) are interactions with myh9 and myh10. The span at 226-242 (SKESTTSSASASMNSHS) shows a compositional bias: low complexity. The interval 255–418 (KDTTVNKAVC…LKQNDISSTA (164 aa)) is interaction with F-actin. Polar residues-rich tracts occupy residues 304 to 326 (KPNE…SSPQ) and 336 to 356 (YSYQ…VQTQ). Positions 416 to 443 (STASLAQQQKKEREKELAALRGRYDRRN) form a coiled coil. A compositionally biased stretch (polar residues) spans 453 to 472 (QGTFPETSSNLPTSDVASCS). The PH domain maps to 975-1099 (SVEDKGFLTM…WMQKLNQFLV (125 aa)).

Interacts with and bundles F-actin. Interacts with the non-muscle myosin II heavy chains myh9 and myh10, and these interactions may be enhanced by the phosphorylation of myosin II regulatory light chain by mylk.

It localises to the nucleus. The protein localises to the cytoplasm. Its subcellular location is the cytoskeleton. The protein resides in the cell cortex. It is found in the cell projection. It localises to the bleb. In terms of biological role, required for cytokinesis. Essential for the structural integrity of the cleavage furrow and for completion of cleavage furrow ingression. Plays a role in bleb assembly during metaphase and anaphase of mitosis. May play a significant role in podocyte cell migration. The polypeptide is Anillin (anln) (Xenopus laevis (African clawed frog)).